A 429-amino-acid chain; its full sequence is Tol-Pal system protein TolB (429 aa).

The N-terminal stretch at 1–28 (MSITPSFSRRSVVSLLAAGAFSSMSAFA) is a signal peptide.

The protein belongs to the TolB family. As to quaternary structure, the Tol-Pal system is composed of five core proteins: the inner membrane proteins TolA, TolQ and TolR, the periplasmic protein TolB and the outer membrane protein Pal. They form a network linking the inner and outer membranes and the peptidoglycan layer.

The protein resides in the periplasm. Part of the Tol-Pal system, which plays a role in outer membrane invagination during cell division and is important for maintaining outer membrane integrity. The polypeptide is Tol-Pal system protein TolB (Polaromonas naphthalenivorans (strain CJ2)).